Consider the following 629-residue polypeptide: Chaperone protein DnaK (629 aa).

A compositionally biased stretch (low complexity) spans 576–587; the sequence is QAYQQQQDAQAG. Residues 576–629 form a disordered region; sequence QAYQQQQDAQAGAAGGAGGMGGMGGMADGPGGAADADGDDEEYVDADFEDVDEE. Gly residues predominate over residues 588–607; that stretch reads AAGGAGGMGGMGGMADGPGG. Residues 611 to 629 are compositionally biased toward acidic residues; that stretch reads ADGDDEEYVDADFEDVDEE.

The protein belongs to the heat shock protein 70 family.

Acts as a chaperone. The polypeptide is Chaperone protein DnaK (Halobacterium salinarum (strain ATCC 29341 / DSM 671 / R1)).